A 156-amino-acid chain; its full sequence is Ribosome maturation factor RimP (156 aa).

It belongs to the RimP family.

Its subcellular location is the cytoplasm. Functionally, required for maturation of 30S ribosomal subunits. This chain is Ribosome maturation factor RimP, found in Bacillus cytotoxicus (strain DSM 22905 / CIP 110041 / 391-98 / NVH 391-98).